Here is a 348-residue protein sequence, read N- to C-terminus: Flagellar P-ring protein (348 aa).

Residues 1-16 form the signal peptide; the sequence is MRVLTIFLLFMTSIFA.

Belongs to the FlgI family. In terms of assembly, the basal body constitutes a major portion of the flagellar organelle and consists of four rings (L,P,S, and M) mounted on a central rod.

Its subcellular location is the periplasm. It is found in the bacterial flagellum basal body. Assembles around the rod to form the L-ring and probably protects the motor/basal body from shearing forces during rotation. This Campylobacter jejuni subsp. doylei (strain ATCC BAA-1458 / RM4099 / 269.97) protein is Flagellar P-ring protein.